A 446-amino-acid polypeptide reads, in one-letter code: Coagulation factor VII (446 aa).

An N-terminal signal peptide occupies residues 1–24; the sequence is MVPQTHGLLLLYFLLQLQGPLGAV. Residues 25-41 constitute a propeptide that is removed on maturation; sequence VFITQEEAHGVLHRQRR. The 45-residue stretch at 42 to 86 folds into the Gla domain; sequence ANSLLEELWSSSLERECNEERCSFEEAREIFKSPERTKQFWTIYS. A 4-carboxyglutamate mark is found at Glu-47, Glu-48, Glu-55, Glu-57, Glu-60, Glu-61, Glu-66, Glu-67, Glu-70, and Glu-76. Residues Cys-58 and Cys-63 are joined by a disulfide bond. In terms of domain architecture, EGF-like 1; calcium-binding spans 87–123; the sequence is DGDQCASNPCQNGGTCQDHLKSYVCFCPLDFEGRNCE. 10 disulfides stabilise this stretch: Cys-91–Cys-102, Cys-96–Cys-111, Cys-113–Cys-122, Cys-132–Cys-143, Cys-139–Cys-153, Cys-155–Cys-168, Cys-176–Cys-303, Cys-200–Cys-205, Cys-219–Cys-235, and Cys-351–Cys-370. A glycan (O-linked (Glc...) serine; alternate) is linked at Ser-93. An O-linked (Xyl...) serine; alternate glycan is attached at Ser-93. Residue Thr-101 is glycosylated (O-linked (Fuc) threonine). Asp-104 carries the (3R)-3-hydroxyaspartate modification. The EGF-like 2 domain maps to 128–169; it reads EQLICANENGDCDQYCRDHVGTKRTCSCHEDYVLQPDEVSCK. Asn-186 carries N-linked (GlcNAc...) asparagine glycosylation. In terms of domain architecture, Peptidase S1 spans 194 to 433; that stretch reads IVGGYVCPKG…YIDWLVKYMD (240 aa). His-234 serves as the catalytic Charge relay system. Asn-244 is a glycosylation site (N-linked (GlcNAc...) asparagine). Residue Asp-283 is the Charge relay system of the active site. A substrate-binding site is contributed by Asp-379. Residues Cys-381 and Cys-409 are joined by a disulfide bond. The active-site Charge relay system is Ser-385.

This sequence belongs to the peptidase S1 family. Heterodimer of a light chain and a heavy chain linked by a disulfide bond. The vitamin K-dependent, enzymatic carboxylation of some glutamate residues allows the modified protein to bind calcium. In terms of processing, the iron and 2-oxoglutarate dependent 3-hydroxylation of aspartate and asparagine is (R) stereospecific within EGF domains. Post-translationally, can be either O-glucosylated or O-xylosylated at Ser-93 by POGLUT1. Plasma.

Its subcellular location is the secreted. The catalysed reaction is Selective cleavage of Arg-|-Ile bond in factor X to form factor Xa.. Its function is as follows. Initiates the extrinsic pathway of blood coagulation. Serine protease that circulates in the blood in a zymogen form. Factor VII is converted to factor VIIa by factor Xa, factor XIIa, factor IXa, or thrombin by minor proteolysis. In the presence of tissue factor and calcium ions, factor VIIa then converts factor X to factor Xa by limited proteolysis. Factor VIIa also converts factor IX to factor IXa in the presence of tissue factor and calcium. The sequence is that of Coagulation factor VII (F7) from Rattus norvegicus (Rat).